The primary structure comprises 375 residues: 23S rRNA (uracil(747)-C(5))-methyltransferase RlmC (375 aa).

[4Fe-4S] cluster contacts are provided by Cys3, Cys11, Cys14, and Cys87. S-adenosyl-L-methionine is bound by residues Gln212, Phe241, Glu262, and Asn307. Residue Cys334 is the Nucleophile of the active site.

Belongs to the class I-like SAM-binding methyltransferase superfamily. RNA M5U methyltransferase family. RlmC subfamily.

It catalyses the reaction uridine(747) in 23S rRNA + S-adenosyl-L-methionine = 5-methyluridine(747) in 23S rRNA + S-adenosyl-L-homocysteine + H(+). In terms of biological role, catalyzes the formation of 5-methyl-uridine at position 747 (m5U747) in 23S rRNA. This is 23S rRNA (uracil(747)-C(5))-methyltransferase RlmC from Shigella flexneri serotype 5b (strain 8401).